A 264-amino-acid chain; its full sequence is Thymidylate synthase (264 aa).

Residue Arg21 coordinates dUMP. His51 is a binding site for (6R)-5,10-methylene-5,6,7,8-tetrahydrofolate. 126–127 provides a ligand contact to dUMP; the sequence is RR. Residue Cys146 is the Nucleophile of the active site. DUMP is bound by residues 166–169, Asn177, and 207–209; these read RSAD and HLY. (6R)-5,10-methylene-5,6,7,8-tetrahydrofolate is bound at residue Asp169. Ala263 contacts (6R)-5,10-methylene-5,6,7,8-tetrahydrofolate.

Belongs to the thymidylate synthase family. Bacterial-type ThyA subfamily. Homodimer.

The protein localises to the cytoplasm. It catalyses the reaction dUMP + (6R)-5,10-methylene-5,6,7,8-tetrahydrofolate = 7,8-dihydrofolate + dTMP. The protein operates within pyrimidine metabolism; dTTP biosynthesis. Its function is as follows. Catalyzes the reductive methylation of 2'-deoxyuridine-5'-monophosphate (dUMP) to 2'-deoxythymidine-5'-monophosphate (dTMP) while utilizing 5,10-methylenetetrahydrofolate (mTHF) as the methyl donor and reductant in the reaction, yielding dihydrofolate (DHF) as a by-product. This enzymatic reaction provides an intracellular de novo source of dTMP, an essential precursor for DNA biosynthesis. The sequence is that of Thymidylate synthase from Paramagnetospirillum magneticum (strain ATCC 700264 / AMB-1) (Magnetospirillum magneticum).